A 131-amino-acid chain; its full sequence is Methylglyoxal synthase (131 aa).

The region spanning 1–131 (MKIALIAHDK…GDLDYRKLRK (131 aa)) is the MGS-like domain. Residues H8, K12, 34 to 37 (TGTT), and 54 to 55 (SG) each bind substrate. Catalysis depends on D60, which acts as the Proton donor/acceptor. H87 lines the substrate pocket.

This sequence belongs to the methylglyoxal synthase family.

The enzyme catalyses dihydroxyacetone phosphate = methylglyoxal + phosphate. Catalyzes the formation of methylglyoxal from dihydroxyacetone phosphate. The protein is Methylglyoxal synthase of Bacillus cereus (strain AH820).